The sequence spans 733 residues: 1,4-alpha-glucan branching enzyme GlgB (733 aa).

Asp412 acts as the Nucleophile in catalysis. The active-site Proton donor is the Glu467.

The protein belongs to the glycosyl hydrolase 13 family. GlgB subfamily. Monomer.

It catalyses the reaction Transfers a segment of a (1-&gt;4)-alpha-D-glucan chain to a primary hydroxy group in a similar glucan chain.. It participates in glycan biosynthesis; glycogen biosynthesis. Catalyzes the formation of the alpha-1,6-glucosidic linkages in glycogen by scission of a 1,4-alpha-linked oligosaccharide from growing alpha-1,4-glucan chains and the subsequent attachment of the oligosaccharide to the alpha-1,6 position. This is 1,4-alpha-glucan branching enzyme GlgB from Burkholderia vietnamiensis (strain G4 / LMG 22486) (Burkholderia cepacia (strain R1808)).